The sequence spans 475 residues: Ribulose bisphosphate carboxylase large chain (475 aa).

A propeptide spanning residues 1-2 (MV) is cleaved from the precursor. Position 3 is an N-acetylproline (Pro-3). An N6,N6,N6-trimethyllysine modification is found at Lys-14. Substrate is bound by residues Asn-123 and Thr-173. Residue Lys-175 is the Proton acceptor of the active site. Residue Lys-177 coordinates substrate. Residues Lys-201, Asp-203, and Glu-204 each coordinate Mg(2+). Lys-201 is modified (N6-carboxylysine). His-294 serves as the catalytic Proton acceptor. 3 residues coordinate substrate: Arg-295, His-327, and Ser-379.

Belongs to the RuBisCO large chain family. Type I subfamily. As to quaternary structure, heterohexadecamer of 8 large chains and 8 small chains; disulfide-linked. The disulfide link is formed within the large subunit homodimers. Requires Mg(2+) as cofactor. In terms of processing, the disulfide bond which can form in the large chain dimeric partners within the hexadecamer appears to be associated with oxidative stress and protein turnover.

The protein resides in the plastid. The protein localises to the chloroplast. It carries out the reaction 2 (2R)-3-phosphoglycerate + 2 H(+) = D-ribulose 1,5-bisphosphate + CO2 + H2O. The enzyme catalyses D-ribulose 1,5-bisphosphate + O2 = 2-phosphoglycolate + (2R)-3-phosphoglycerate + 2 H(+). Its function is as follows. RuBisCO catalyzes two reactions: the carboxylation of D-ribulose 1,5-bisphosphate, the primary event in carbon dioxide fixation, as well as the oxidative fragmentation of the pentose substrate in the photorespiration process. Both reactions occur simultaneously and in competition at the same active site. The polypeptide is Ribulose bisphosphate carboxylase large chain (Tetradesmus obliquus (Green alga)).